Consider the following 67-residue polypeptide: uncharacterized protein (67 aa).

A run of 2 helical transmembrane segments spans residues 10–30 (EFFI…ITMW) and 40–60 (LMVG…WMVF).

Belongs to the plectrovirus ORF10 family.

Its subcellular location is the host membrane. This is an uncharacterized protein from Spiroplasma citri (SpV1).